The chain runs to 471 residues: Glutamate--tRNA ligase (471 aa).

Residues 9–19 (PSPTGYLHVGG) carry the 'HIGH' region motif. Zn(2+) is bound by residues C98, C100, C125, and D127. Residues 237–241 (KLSKR) carry the 'KMSKS' region motif. K240 contacts ATP.

It belongs to the class-I aminoacyl-tRNA synthetase family. Glutamate--tRNA ligase type 1 subfamily. In terms of assembly, monomer. Zn(2+) serves as cofactor.

It is found in the cytoplasm. The enzyme catalyses tRNA(Glu) + L-glutamate + ATP = L-glutamyl-tRNA(Glu) + AMP + diphosphate. Catalyzes the attachment of glutamate to tRNA(Glu) in a two-step reaction: glutamate is first activated by ATP to form Glu-AMP and then transferred to the acceptor end of tRNA(Glu). The polypeptide is Glutamate--tRNA ligase (Yersinia enterocolitica serotype O:8 / biotype 1B (strain NCTC 13174 / 8081)).